We begin with the raw amino-acid sequence, 309 residues long: ATP synthase gamma chain (309 aa).

It belongs to the ATPase gamma chain family. As to quaternary structure, F-type ATPases have 2 components, CF(1) - the catalytic core - and CF(0) - the membrane proton channel. CF(1) has five subunits: alpha(3), beta(3), gamma(1), delta(1), epsilon(1). CF(0) has three main subunits: a, b and c.

The protein localises to the cell membrane. Functionally, produces ATP from ADP in the presence of a proton gradient across the membrane. The gamma chain is believed to be important in regulating ATPase activity and the flow of protons through the CF(0) complex. This Salinispora tropica (strain ATCC BAA-916 / DSM 44818 / JCM 13857 / NBRC 105044 / CNB-440) protein is ATP synthase gamma chain.